The chain runs to 202 residues: ATP-dependent Clp protease proteolytic subunit (202 aa).

Ser106 acts as the Nucleophile in catalysis. His131 is an active-site residue.

It belongs to the peptidase S14 family. In terms of assembly, fourteen ClpP subunits assemble into 2 heptameric rings which stack back to back to give a disk-like structure with a central cavity, resembling the structure of eukaryotic proteasomes.

The protein localises to the cytoplasm. It carries out the reaction Hydrolysis of proteins to small peptides in the presence of ATP and magnesium. alpha-casein is the usual test substrate. In the absence of ATP, only oligopeptides shorter than five residues are hydrolyzed (such as succinyl-Leu-Tyr-|-NHMec, and Leu-Tyr-Leu-|-Tyr-Trp, in which cleavage of the -Tyr-|-Leu- and -Tyr-|-Trp bonds also occurs).. Its function is as follows. Cleaves peptides in various proteins in a process that requires ATP hydrolysis. Has a chymotrypsin-like activity. Plays a major role in the degradation of misfolded proteins. The chain is ATP-dependent Clp protease proteolytic subunit from Verminephrobacter eiseniae (strain EF01-2).